A 172-amino-acid polypeptide reads, in one-letter code: Peptide methionine sulfoxide reductase MsrA (172 aa).

C14 is a catalytic residue.

The protein belongs to the MsrA Met sulfoxide reductase family.

The catalysed reaction is L-methionyl-[protein] + [thioredoxin]-disulfide + H2O = L-methionyl-(S)-S-oxide-[protein] + [thioredoxin]-dithiol. It catalyses the reaction [thioredoxin]-disulfide + L-methionine + H2O = L-methionine (S)-S-oxide + [thioredoxin]-dithiol. Has an important function as a repair enzyme for proteins that have been inactivated by oxidation. Catalyzes the reversible oxidation-reduction of methionine sulfoxide in proteins to methionine. The polypeptide is Peptide methionine sulfoxide reductase MsrA (Streptomyces coelicolor (strain ATCC BAA-471 / A3(2) / M145)).